Here is a 620-residue protein sequence, read N- to C-terminus: 1-deoxy-D-xylulose-5-phosphate synthase (620 aa).

Thiamine diphosphate is bound by residues histidine 80 and 121–123; that span reads GHS. Aspartate 152 is a Mg(2+) binding site. Thiamine diphosphate contacts are provided by residues 153 to 154, asparagine 181, tyrosine 288, and glutamate 370; that span reads GA. Residue asparagine 181 coordinates Mg(2+).

Belongs to the transketolase family. DXPS subfamily. In terms of assembly, homodimer. Requires Mg(2+) as cofactor. Thiamine diphosphate is required as a cofactor.

The catalysed reaction is D-glyceraldehyde 3-phosphate + pyruvate + H(+) = 1-deoxy-D-xylulose 5-phosphate + CO2. It participates in metabolic intermediate biosynthesis; 1-deoxy-D-xylulose 5-phosphate biosynthesis; 1-deoxy-D-xylulose 5-phosphate from D-glyceraldehyde 3-phosphate and pyruvate: step 1/1. Its function is as follows. Catalyzes the acyloin condensation reaction between C atoms 2 and 3 of pyruvate and glyceraldehyde 3-phosphate to yield 1-deoxy-D-xylulose-5-phosphate (DXP). The chain is 1-deoxy-D-xylulose-5-phosphate synthase from Salmonella paratyphi A (strain ATCC 9150 / SARB42).